A 593-amino-acid chain; its full sequence is Meiotic recombination protein REC8 homolog (593 aa).

Position 149 is a phosphoserine (S149). T164 is modified (phosphothreonine). Residue S192 is modified to Phosphoserine. Disordered stretches follow at residues 247–282 (QRRA…AQVE), 317–344 (ELRL…RRGR), and 422–444 (PQLE…RRKT). Over residues 255–265 (DESKEEPRALE) the composition is skewed to basic and acidic residues. Basic and acidic residues predominate over residues 432 to 444 (EERVADKEERRKT).

Belongs to the rad21 family. Interacts (phosphorylated and unphosphorylated form) with SMC3. Interacts with SYCP3. Interacts (phosphorylated and unphosphorylated form) with SMC1B. Does not interact with SMC1A. Interacts with RAD51. Forms a complex with EWSR1, PRDM9, SYCP3 and SYCP1; complex formation is dependent of phosphorylated form of REC8 and requires PRDM9 bound to hotspot DNA; EWSR1 joins PRDM9 with the chromosomal axis through REC8. Phosphorylated.

The protein resides in the nucleus. Its subcellular location is the chromosome. The protein localises to the centromere. Its function is as follows. Required during meiosis for separation of sister chromatids and homologous chromosomes. Proteolytic cleavage of REC8 on chromosome arms by separin during anaphase I allows for homologous chromosome separation in meiosis I and cleavage of REC8 on centromeres during anaphase II allows for sister chromatid separation in meiosis II. The protein is Meiotic recombination protein REC8 homolog of Rattus norvegicus (Rat).